Reading from the N-terminus, the 1031-residue chain is Telomerase reverse transcriptase (1031 aa).

Positions 498–852 (KEVEEWKKSL…DYCDWIGISI (355 aa)) constitute a Reverse transcriptase domain. Mg(2+) contacts are provided by Asp-603, Asp-781, and Asp-782.

The protein belongs to the reverse transcriptase family. Telomerase subfamily. As to quaternary structure, component of the telomerase holoenzyme complex composed minimally of the catalytic subunit p123 and the telomerase RNA template component.

The protein resides in the nucleus. It is found in the chromosome. It localises to the telomere. The enzyme catalyses DNA(n) + a 2'-deoxyribonucleoside 5'-triphosphate = DNA(n+1) + diphosphate. In terms of biological role, telomerase is a ribonucleoprotein enzyme essential for the replication of chromosome termini in most eukaryotes. It elongates telomeres. It is a reverse transcriptase that adds simple sequence repeats to chromosome ends by copying a template sequence within the RNA component of the enzyme. The chain is Telomerase reverse transcriptase from Euplotes aediculatus (Ciliate).